Here is a 309-residue protein sequence, read N- to C-terminus: Serine/threonine-protein phosphatase CPPED1 (309 aa).

The catalytic stretch occupies residues 47–250 (WRIGDCDSGG…FSGHYHRNAG (204 aa)). Residues D51, D88, N125, and H244 each contribute to the a divalent metal cation site.

It belongs to the metallophosphoesterase superfamily. CPPED1 family. The cofactor is a divalent metal cation.

Its subcellular location is the cytoplasm. The enzyme catalyses O-phospho-L-seryl-[protein] + H2O = L-seryl-[protein] + phosphate. It carries out the reaction O-phospho-L-threonyl-[protein] + H2O = L-threonyl-[protein] + phosphate. Protein phosphatase involved in the dephosphorylation of AKT kinase family. The protein is Serine/threonine-protein phosphatase CPPED1 (cpped1) of Danio rerio (Zebrafish).